The following is a 76-amino-acid chain: Large ribosomal subunit protein uL29 (76 aa).

Belongs to the universal ribosomal protein uL29 family.

This Corynebacterium kroppenstedtii (strain DSM 44385 / JCM 11950 / CIP 105744 / CCUG 35717) protein is Large ribosomal subunit protein uL29.